The sequence spans 156 residues: Small ribosomal subunit protein uS7 (156 aa).

This sequence belongs to the universal ribosomal protein uS7 family. As to quaternary structure, part of the 30S ribosomal subunit. Contacts proteins S9 and S11.

Its function is as follows. One of the primary rRNA binding proteins, it binds directly to 16S rRNA where it nucleates assembly of the head domain of the 30S subunit. Is located at the subunit interface close to the decoding center, probably blocks exit of the E-site tRNA. This is Small ribosomal subunit protein uS7 from Thermomicrobium roseum (strain ATCC 27502 / DSM 5159 / P-2).